The chain runs to 315 residues: Porphobilinogen deaminase (315 aa).

Cys245 bears the S-(dipyrrolylmethanemethyl)cysteine mark.

The protein belongs to the HMBS family. Monomer. Requires dipyrromethane as cofactor.

The enzyme catalyses 4 porphobilinogen + H2O = hydroxymethylbilane + 4 NH4(+). It participates in porphyrin-containing compound metabolism; protoporphyrin-IX biosynthesis; coproporphyrinogen-III from 5-aminolevulinate: step 2/4. The protein operates within porphyrin-containing compound metabolism; chlorophyll biosynthesis. Functionally, tetrapolymerization of the monopyrrole PBG into the hydroxymethylbilane pre-uroporphyrinogen in several discrete steps. In Prochlorococcus marinus (strain NATL2A), this protein is Porphobilinogen deaminase.